Here is a 259-residue protein sequence, read N- to C-terminus: Leucine-rich repeat-containing protein 61 (259 aa).

LRR repeat units follow at residues 54–75 (NLEW…ASLR), 76–97 (QLAV…AACE), and 98–119 (NLQS…QCLA). One can recognise an LRRCT domain in the interval 138 to 178 (NPLCANASYWAVVRELLPGLKVIDGERVSGRGSELYQLCRD).

The sequence is that of Leucine-rich repeat-containing protein 61 (Lrrc61) from Mus musculus (Mouse).